Here is a 231-residue protein sequence, read N- to C-terminus: Enolase-phosphatase E1 (231 aa).

Residues 206 to 231 are disordered; the sequence is LLERPGNAPQPKHSHPKISSFENFNP.

It belongs to the HAD-like hydrolase superfamily. MasA/MtnC family. Monomer. Requires Mg(2+) as cofactor.

It carries out the reaction 5-methylsulfanyl-2,3-dioxopentyl phosphate + H2O = 1,2-dihydroxy-5-(methylsulfanyl)pent-1-en-3-one + phosphate. Its pathway is amino-acid biosynthesis; L-methionine biosynthesis via salvage pathway; L-methionine from S-methyl-5-thio-alpha-D-ribose 1-phosphate: step 3/6. It participates in amino-acid biosynthesis; L-methionine biosynthesis via salvage pathway; L-methionine from S-methyl-5-thio-alpha-D-ribose 1-phosphate: step 4/6. In terms of biological role, bifunctional enzyme that catalyzes the enolization of 2,3-diketo-5-methylthiopentyl-1-phosphate (DK-MTP-1-P) into the intermediate 2-hydroxy-3-keto-5-methylthiopentenyl-1-phosphate (HK-MTPenyl-1-P), which is then dephosphorylated to form the acireductone 1,2-dihydroxy-3-keto-5-methylthiopentene (DHK-MTPene). The polypeptide is Enolase-phosphatase E1 (Leptospira borgpetersenii serovar Hardjo-bovis (strain JB197)).